The following is a 199-amino-acid chain: Protein OPI10 homolog (199 aa).

The protein belongs to the OPI10 family.

This Aedes aegypti (Yellowfever mosquito) protein is Protein OPI10 homolog.